Here is a 300-residue protein sequence, read N- to C-terminus: Mitochondrial GTP/GDP carrier protein 1 (300 aa).

Solcar repeat units lie at residues 8–108, 117–198, and 208–293; these read QSGL…KKDF, GKAM…AKEY, and ATWS…LIPR. The next 6 membrane-spanning stretches (helical) occupy residues 14-34, 85-101, 122-142, 173-189, 214-234, and 268-285; these read LLGS…VDTI, QRVY…EFLN, SAAA…LDVL, GWGW…FALF, FISS…LDVI, and GLTP…FSFA.

It belongs to the mitochondrial carrier (TC 2.A.29) family.

The protein localises to the mitochondrion inner membrane. Mitochondrial GTP/GDP transporter required for GTP uptake and GDP exit from mitochondria. Involved in mitochondrial iron transport and essential for mitochondrial genome maintenance. This Saccharomyces cerevisiae (strain ATCC 204508 / S288c) (Baker's yeast) protein is Mitochondrial GTP/GDP carrier protein 1 (GGC1).